The sequence spans 130 residues: Histone H2A type 1-E (130 aa).

The disordered stretch occupies residues 1 to 22; the sequence is MSGRGKQGGKARAKAKTRSSRA. Ser-2 carries the post-translational modification N-acetylserine. A Phosphoserine; by RPS6KA5 modification is found at Ser-2. A Citrulline; alternate modification is found at Arg-4. A Symmetric dimethylarginine; by PRMT5; alternate modification is found at Arg-4. Lys-6 and Lys-10 each carry N6-(2-hydroxyisobutyryl)lysine; alternate. At Lys-6 the chain carries N6-acetyllysine; alternate. Residues 7–19 show a composition bias toward basic residues; it reads QGGKARAKAKTRS. Lys-10 bears the N6-lactoyllysine; alternate mark. Lys-10 is subject to N6-succinyllysine; alternate. Residues Lys-14 and Lys-16 each participate in a glycyl lysine isopeptide (Lys-Gly) (interchain with G-Cter in ubiquitin) cross-link. Lys-37 carries the N6-(2-hydroxyisobutyryl)lysine; alternate modification. Lys-37 is modified (N6-(beta-hydroxybutyryl)lysine; alternate). Lys-37 bears the N6-crotonyllysine; alternate mark. N6-(2-hydroxyisobutyryl)lysine is present on residues Lys-75 and Lys-76. The residue at position 96 (Lys-96) is an N6-(2-hydroxyisobutyryl)lysine; alternate. Lys-96 is modified (N6-succinyllysine; alternate). Lys-96 carries the post-translational modification N6-glutaryllysine; alternate. Position 105 is an N5-methylglutamine (Gln-105). Residue Lys-119 is modified to N6-(2-hydroxyisobutyryl)lysine; alternate. N6-crotonyllysine; alternate is present on residues Lys-119 and Lys-120. N6-glutaryllysine; alternate is present on residues Lys-119 and Lys-120. Lys-120 is covalently cross-linked (Glycyl lysine isopeptide (Lys-Gly) (interchain with G-Cter in ubiquitin); alternate). Thr-121 is subject to Phosphothreonine; by DCAF1. Position 126 is an N6-crotonyllysine; alternate (Lys-126). Lys-126 carries the post-translational modification N6-glutaryllysine; alternate.

Belongs to the histone H2A family. In terms of assembly, the nucleosome is a histone octamer containing two molecules each of H2A, H2B, H3 and H4 assembled in one H3-H4 heterotetramer and two H2A-H2B heterodimers. The octamer wraps approximately 147 bp of DNA. In terms of processing, deiminated on Arg-4 in granulocytes upon calcium entry. Monoubiquitination of Lys-120 (H2AK119Ub) by RING1, TRIM37 and RNF2/RING2 complex gives a specific tag for epigenetic transcriptional repression and participates in X chromosome inactivation of female mammals. It is involved in the initiation of both imprinted and random X inactivation. Ubiquitinated H2A is enriched in inactive X chromosome chromatin. Ubiquitination of H2A functions downstream of methylation of 'Lys-27' of histone H3 (H3K27me). H2AK119Ub by RNF2/RING2 can also be induced by ultraviolet and may be involved in DNA repair. Following DNA double-strand breaks (DSBs), it is ubiquitinated through 'Lys-63' linkage of ubiquitin moieties by the E2 ligase UBE2N and the E3 ligases RNF8 and RNF168, leading to the recruitment of repair proteins to sites of DNA damage. Ubiquitination at Lys-14 and Lys-16 (H2AK13Ub and H2AK15Ub, respectively) in response to DNA damage is initiated by RNF168 that mediates monoubiquitination at these 2 sites, and 'Lys-63'-linked ubiquitin are then conjugated to monoubiquitin; RNF8 is able to extend 'Lys-63'-linked ubiquitin chains in vitro. H2AK119Ub and ionizing radiation-induced 'Lys-63'-linked ubiquitination (H2AK13Ub and H2AK15Ub) are distinct events. Post-translationally, phosphorylation on Ser-2 (H2AS1ph) is enhanced during mitosis. Phosphorylation on Ser-2 by RPS6KA5/MSK1 directly represses transcription. Acetylation of H3 inhibits Ser-2 phosphorylation by RPS6KA5/MSK1. Phosphorylation at Thr-121 (H2AT120ph) by DCAF1 is present in the regulatory region of many tumor suppresor genes and down-regulates their transcription. In terms of processing, symmetric dimethylation on Arg-4 by the PRDM1/PRMT5 complex may play a crucial role in the germ-cell lineage. Glutamine methylation at Gln-105 (H2AQ104me) by FBL is specifically dedicated to polymerase I. It is present at 35S ribosomal DNA locus and impairs binding of the FACT complex. Post-translationally, crotonylation (Kcr) is specifically present in male germ cells and marks testis-specific genes in post-meiotic cells, including X-linked genes that escape sex chromosome inactivation in haploid cells. Crotonylation marks active promoters and enhancers and confers resistance to transcriptional repressors. It is also associated with post-meiotically activated genes on autosomes. In terms of processing, lactylated in macrophages by EP300/P300 by using lactoyl-CoA directly derived from endogenous or exogenous lactate, leading to stimulates gene transcription.

The protein resides in the nucleus. Its subcellular location is the chromosome. Its function is as follows. Core component of nucleosome. Nucleosomes wrap and compact DNA into chromatin, limiting DNA accessibility to the cellular machineries which require DNA as a template. Histones thereby play a central role in transcription regulation, DNA repair, DNA replication and chromosomal stability. DNA accessibility is regulated via a complex set of post-translational modifications of histones, also called histone code, and nucleosome remodeling. The chain is Histone H2A type 1-E from Rattus norvegicus (Rat).